We begin with the raw amino-acid sequence, 245 residues long: 23S rRNA (guanosine-2'-O-)-methyltransferase RlmB (245 aa).

The S-adenosyl-L-methionine site is built by glycine 197, isoleucine 217, and leucine 226.

The protein belongs to the class IV-like SAM-binding methyltransferase superfamily. RNA methyltransferase TrmH family. RlmB subfamily.

The protein localises to the cytoplasm. The enzyme catalyses guanosine(2251) in 23S rRNA + S-adenosyl-L-methionine = 2'-O-methylguanosine(2251) in 23S rRNA + S-adenosyl-L-homocysteine + H(+). Functionally, specifically methylates the ribose of guanosine 2251 in 23S rRNA. In Bordetella parapertussis (strain 12822 / ATCC BAA-587 / NCTC 13253), this protein is 23S rRNA (guanosine-2'-O-)-methyltransferase RlmB.